A 99-amino-acid polypeptide reads, in one-letter code: DNA/RNA-binding protein Alba 1 (99 aa).

Lys17 carries the post-translational modification N6-acetyllysine.

Belongs to the histone-like Alba family. Post-translationally, acetylated. Acetylation at Lys-17 decreases DNA-binding affinity.

It localises to the cytoplasm. The protein resides in the chromosome. Functionally, binds double-stranded DNA tightly but without sequence specificity. Involved in DNA compaction. The sequence is that of DNA/RNA-binding protein Alba 1 from Sulfurisphaera tokodaii (strain DSM 16993 / JCM 10545 / NBRC 100140 / 7) (Sulfolobus tokodaii).